Consider the following 104-residue polypeptide: Large ribosomal subunit protein bL21 (104 aa).

Over residues 78 to 91 the composition is skewed to basic residues; the sequence is KRRRQNSRRKRGHR. Residues 78–104 are disordered; that stretch reads KRRRQNSRRKRGHRQDHTVVRITGISA.

It belongs to the bacterial ribosomal protein bL21 family. Part of the 50S ribosomal subunit. Contacts protein L20.

Its function is as follows. This protein binds to 23S rRNA in the presence of protein L20. This is Large ribosomal subunit protein bL21 from Methylobacterium radiotolerans (strain ATCC 27329 / DSM 1819 / JCM 2831 / NBRC 15690 / NCIMB 10815 / 0-1).